We begin with the raw amino-acid sequence, 429 residues long: Argininosuccinate lyase (429 aa).

This sequence belongs to the lyase 1 family. Argininosuccinate lyase subfamily.

The protein resides in the cytoplasm. It carries out the reaction 2-(N(omega)-L-arginino)succinate = fumarate + L-arginine. It functions in the pathway amino-acid biosynthesis; L-arginine biosynthesis; L-arginine from L-ornithine and carbamoyl phosphate: step 3/3. This is Argininosuccinate lyase from Pyrobaculum islandicum (strain DSM 4184 / JCM 9189 / GEO3).